The chain runs to 304 residues: Probable phytol kinase 2, chloroplastic (304 aa).

A chloroplast-targeting transit peptide spans 1–59; sequence MVSLISAHLLSLPSSAPRSRPQSRPPLSPPAAAAAASCSFDLPRPRRLVADGSRRKGTM. The next 7 membrane-spanning stretches (helical) occupy residues 68-88, 113-133, 134-154, 170-190, 194-214, 231-251, and 256-276; these read SGLAHDLGSAAVTAGVALALL, IGMVFLLFWPLFSSGSYAPFL, AAVAPGINIIRMLLLGLGVMK, ELLKGPLYYATTITFATSIFW, PIAIALICNLCAGDGIADIVG, AGSIAMALAGFMASIGYMHYF, and FIEESWSLAFGFLVVSVTAAL.

The protein belongs to the polyprenol kinase family.

Its subcellular location is the plastid. It is found in the chloroplast membrane. The catalysed reaction is phytol + CTP = phytyl phosphate + CDP + H(+). It functions in the pathway cofactor biosynthesis; tocopherol biosynthesis. Involved in the activation and reutilization of phytol from chlorophyll degradation in plant metabolism, including tocopherol biosynthesis. Catalyzes the conversion of phytol to phytol monophosphate (PMP). This chain is Probable phytol kinase 2, chloroplastic, found in Oryza sativa subsp. japonica (Rice).